Reading from the N-terminus, the 700-residue chain is Non-hemolytic phospholipase C (700 aa).

Positions 1–34 form a signal peptide, tat-type signal; it reads MTNQNRRDFLRLAAGTAGAAALQLFPPVIREALA.

Belongs to the bacterial phospholipase C family. Post-translationally, predicted to be exported by the Tat system. The position of the signal peptide cleavage has not been experimentally proven.

The enzyme catalyses a 1,2-diacyl-sn-glycero-3-phosphocholine + H2O = phosphocholine + a 1,2-diacyl-sn-glycerol + H(+). Hydrolyzes phosphatidylserine as well as phosphatidylcholine. This Burkholderia pseudomallei (strain K96243) protein is Non-hemolytic phospholipase C (plcN).